The primary structure comprises 680 residues: DNA ligase (680 aa).

Residues 44 to 48 (DYIYD), 94 to 95 (SL), and Glu124 each bind NAD(+). Catalysis depends on Lys126, which acts as the N6-AMP-lysine intermediate. Residues Arg147, Glu181, Lys297, and Lys321 each contribute to the NAD(+) site. Zn(2+) contacts are provided by Cys415, Cys418, Cys433, and Cys438. Residues 598-680 (DENSFFYGKK…VDEQVKEDGK (83 aa)) enclose the BRCT domain.

It belongs to the NAD-dependent DNA ligase family. LigA subfamily. It depends on Mg(2+) as a cofactor. The cofactor is Mn(2+).

It catalyses the reaction NAD(+) + (deoxyribonucleotide)n-3'-hydroxyl + 5'-phospho-(deoxyribonucleotide)m = (deoxyribonucleotide)n+m + AMP + beta-nicotinamide D-nucleotide.. DNA ligase that catalyzes the formation of phosphodiester linkages between 5'-phosphoryl and 3'-hydroxyl groups in double-stranded DNA using NAD as a coenzyme and as the energy source for the reaction. It is essential for DNA replication and repair of damaged DNA. The sequence is that of DNA ligase from Leuconostoc mesenteroides subsp. mesenteroides (strain ATCC 8293 / DSM 20343 / BCRC 11652 / CCM 1803 / JCM 6124 / NCDO 523 / NBRC 100496 / NCIMB 8023 / NCTC 12954 / NRRL B-1118 / 37Y).